The sequence spans 348 residues: GMP reductase 2 (348 aa).

NADP(+) contacts are provided by residues 26-27 (SR), lysine 78, 129-131 (DVA), and 180-181 (IG). K(+) is bound by residues glycine 181, glycine 183, and cysteine 186. Cysteine 186 serves as the catalytic Thioimidate intermediate. Threonine 188 functions as the Proton donor/acceptor in the catalytic mechanism. Arginine 189 is a K(+) binding site. Residues 219–221 (DGG), 242–243 (GG), 268–270 (GMS), and 286–290 (RASEG) each bind GMP. NADP(+) is bound by residues methionine 269 and 285–286 (YR). Lysine 291 bears the N6-acetyllysine mark. 314–317 (STCT) is an NADP(+) binding site.

It belongs to the IMPDH/GMPR family. GuaC type 1 subfamily. In terms of assembly, homotetramer. As to expression, highly expressed in heart, skeletal muscle, kidney, brain, liver, prostate, spleen, placenta, testis and ovary. Low expression in colon, thymus and peripheral blood leukocytes.

It carries out the reaction IMP + NH4(+) + NADP(+) = GMP + NADPH + 2 H(+). Its function is as follows. Catalyzes the irreversible NADPH-dependent deamination of GMP to IMP. It functions in the conversion of nucleobase, nucleoside and nucleotide derivatives of G to A nucleotides, and in maintaining the intracellular balance of A and G nucleotides. Plays a role in modulating cellular differentiation. This is GMP reductase 2 from Homo sapiens (Human).